The primary structure comprises 149 residues: Large ribosomal subunit protein eL19 (149 aa).

A disordered region spans residues 67-90; the sequence is KRKLQKRKGRRRGHGSRKGAKGAR.

The protein belongs to the eukaryotic ribosomal protein eL19 family. In terms of assembly, part of the 50S ribosomal subunit.

Binds to the 23S rRNA. The chain is Large ribosomal subunit protein eL19 from Archaeoglobus fulgidus (strain ATCC 49558 / DSM 4304 / JCM 9628 / NBRC 100126 / VC-16).